Here is a 191-residue protein sequence, read N- to C-terminus: 3-hydroxyanthranilate 3,4-dioxygenase 2 (191 aa).

An O2-binding site is contributed by arginine 48. Fe cation-binding residues include histidine 52, glutamate 73, and histidine 111. Glutamate 73 contributes to the substrate binding site. Substrate-binding residues include arginine 115 and glutamate 125.

It belongs to the 3-HAO family. Fe(2+) serves as cofactor.

The protein localises to the cytoplasm. The enzyme catalyses 3-hydroxyanthranilate + O2 = (2Z,4Z)-2-amino-3-carboxymuconate 6-semialdehyde. It functions in the pathway cofactor biosynthesis; NAD(+) biosynthesis; quinolinate from L-kynurenine: step 3/3. In terms of biological role, catalyzes the oxidative ring opening of 3-hydroxyanthranilate to 2-amino-3-carboxymuconate semialdehyde, which spontaneously cyclizes to quinolinate. The polypeptide is 3-hydroxyanthranilate 3,4-dioxygenase 2 (bna1-2) (Aspergillus clavatus (strain ATCC 1007 / CBS 513.65 / DSM 816 / NCTC 3887 / NRRL 1 / QM 1276 / 107)).